We begin with the raw amino-acid sequence, 339 residues long: Alcohol dehydrogenase (339 aa).

Zn(2+) contacts are provided by Cys38, His61, Cys92, Cys95, Cys98, Cys106, and Cys148. Residues 172-177 (GIGGLG), Asp195, Lys200, 260-262 (VGL), and Arg331 contribute to the NAD(+) site.

Belongs to the zinc-containing alcohol dehydrogenase family. Zn(2+) serves as cofactor.

It catalyses the reaction a primary alcohol + NAD(+) = an aldehyde + NADH + H(+). The enzyme catalyses a secondary alcohol + NAD(+) = a ketone + NADH + H(+). The rate-limiting step is NADH release. Catabolite repression. Its function is as follows. Active with primary alcohols, including methanol. The sequence is that of Alcohol dehydrogenase (adh) from Geobacillus stearothermophilus (Bacillus stearothermophilus).